The following is a 274-amino-acid chain: Rhamnulose-1-phosphate aldolase (274 aa).

The active site involves glutamate 117. Residues histidine 141, histidine 143, and histidine 212 each contribute to the Zn(2+) site.

It belongs to the aldolase class II family. RhaD subfamily. As to quaternary structure, homotetramer. It depends on Zn(2+) as a cofactor.

The protein resides in the cytoplasm. It catalyses the reaction L-rhamnulose 1-phosphate = (S)-lactaldehyde + dihydroxyacetone phosphate. Its pathway is carbohydrate degradation; L-rhamnose degradation; glycerone phosphate from L-rhamnose: step 3/3. In terms of biological role, catalyzes the reversible cleavage of L-rhamnulose-1-phosphate to dihydroxyacetone phosphate (DHAP) and L-lactaldehyde. In Escherichia coli O157:H7, this protein is Rhamnulose-1-phosphate aldolase.